The following is a 130-amino-acid chain: Small ribosomal subunit protein uS11 (130 aa).

This sequence belongs to the universal ribosomal protein uS11 family. Part of the 30S ribosomal subunit. Interacts with proteins S7 and S18. Binds to IF-3.

Functionally, located on the platform of the 30S subunit, it bridges several disparate RNA helices of the 16S rRNA. Forms part of the Shine-Dalgarno cleft in the 70S ribosome. This chain is Small ribosomal subunit protein uS11, found in Shewanella sediminis (strain HAW-EB3).